Reading from the N-terminus, the 325-residue chain is Ribosomal RNA small subunit methyltransferase H (325 aa).

Residues 33–35, Asp-52, Leu-87, Asp-101, and Gln-108 each bind S-adenosyl-L-methionine; that span reads GGH. Positions 285–325 are disordered; it reads AEPAGEVEKADNPRAASVRLRAAERTAPNPDRTQPTIGGAS. Positions 315-325 are enriched in polar residues; that stretch reads DRTQPTIGGAS.

The protein belongs to the methyltransferase superfamily. RsmH family.

The protein resides in the cytoplasm. The enzyme catalyses cytidine(1402) in 16S rRNA + S-adenosyl-L-methionine = N(4)-methylcytidine(1402) in 16S rRNA + S-adenosyl-L-homocysteine + H(+). Its function is as follows. Specifically methylates the N4 position of cytidine in position 1402 (C1402) of 16S rRNA. This Frankia alni (strain DSM 45986 / CECT 9034 / ACN14a) protein is Ribosomal RNA small subunit methyltransferase H.